The sequence spans 931 residues: Netrin receptor UNC5C (931 aa).

Positions 1-39 (MGKGLEGTAARCGLGMGYLLHSVVLPALAVLGASRPGSA) are cleaved as a signal peptide. Residues 40-380 (AQDDDFFHEL…APDSDDVALY (341 aa)) are Extracellular-facing. Positions 62–159 (PHFLIEPEEA…AGTTKSRKAY (98 aa)) constitute an Ig-like domain. 9 disulfide bridges follow: Cys83–Cys144, Cys95–Cys142, Cys188–Cys239, Cys272–Cys309, Cys276–Cys313, Cys287–Cys299, Cys328–Cys362, Cys332–Cys367, and Cys340–Cys352. An Ig-like C2-type domain is found at 161 to 256 (RIAYLRKTFE…KRKSTTATVI (96 aa)). Asn236 carries an N-linked (GlcNAc...) asparagine glycan. TSP type-1 domains follow at residues 260–314 (NGGW…TLCP) and 316–368 (DGKW…GLCM). N-linked (GlcNAc...) asparagine glycosylation is present at Asn361. The chain crosses the membrane as a helical span at residues 381–401 (VGIVIAVIVCLAISVVVALFV). Topologically, residues 402 to 931 (YRKNHRDFES…VVSLAAEGNY (530 aa)) are cytoplasmic. One can recognise a ZU5 domain in the interval 530–664 (CTAFGTFNSL…EACHILTETL (135 aa)). In terms of domain architecture, Death spans 850 to 929 (QKLCSSLDAP…ETVVSLAAEG (80 aa)).

This sequence belongs to the unc-5 family. As to expression, restricted to proprioceptive neurons.

It is found in the cell membrane. Its subcellular location is the cell surface. The protein resides in the synapse. The protein localises to the synaptosome. It localises to the cell projection. It is found in the axon. Its subcellular location is the dendrite. The protein resides in the growth cone. The protein localises to the lamellipodium. It localises to the filopodium. Functionally, receptor for netrin required for axon guidance. Mediates axon repulsion of neuronal growth cones in the developing nervous system upon ligand binding. Involved in dorsal root ganglion axon projection towards the spinal cord. The sequence is that of Netrin receptor UNC5C (UNC5C) from Gallus gallus (Chicken).